Reading from the N-terminus, the 79-residue chain is uncharacterized protein (79 aa).

Belongs to the UPF0440 family.

This is an uncharacterized protein from Methanocella arvoryzae (strain DSM 22066 / NBRC 105507 / MRE50).